Consider the following 277-residue polypeptide: NH(3)-dependent NAD(+) synthetase (277 aa).

47–54 contributes to the ATP binding site; that stretch reads GISGGQDS. Asp53 serves as a coordination point for Mg(2+). Arg141 contributes to the deamido-NAD(+) binding site. Thr161 contributes to the ATP binding site. Residue Glu166 participates in Mg(2+) binding. Deamido-NAD(+) contacts are provided by Lys174 and Asp181. Residues Lys190 and Thr212 each contribute to the ATP site. A deamido-NAD(+)-binding site is contributed by 261-262; sequence HK.

It belongs to the NAD synthetase family. Homodimer.

It catalyses the reaction deamido-NAD(+) + NH4(+) + ATP = AMP + diphosphate + NAD(+) + H(+). Its pathway is cofactor biosynthesis; NAD(+) biosynthesis; NAD(+) from deamido-NAD(+) (ammonia route): step 1/1. In terms of biological role, catalyzes the ATP-dependent amidation of deamido-NAD to form NAD. Uses ammonia as a nitrogen source. The protein is NH(3)-dependent NAD(+) synthetase of Lactobacillus johnsonii (strain CNCM I-12250 / La1 / NCC 533).